The sequence spans 570 residues: Proline--tRNA ligase (570 aa).

The protein belongs to the class-II aminoacyl-tRNA synthetase family. ProS type 1 subfamily. Homodimer.

It localises to the cytoplasm. It catalyses the reaction tRNA(Pro) + L-proline + ATP = L-prolyl-tRNA(Pro) + AMP + diphosphate. In terms of biological role, catalyzes the attachment of proline to tRNA(Pro) in a two-step reaction: proline is first activated by ATP to form Pro-AMP and then transferred to the acceptor end of tRNA(Pro). As ProRS can inadvertently accommodate and process non-cognate amino acids such as alanine and cysteine, to avoid such errors it has two additional distinct editing activities against alanine. One activity is designated as 'pretransfer' editing and involves the tRNA(Pro)-independent hydrolysis of activated Ala-AMP. The other activity is designated 'posttransfer' editing and involves deacylation of mischarged Ala-tRNA(Pro). The misacylated Cys-tRNA(Pro) is not edited by ProRS. This chain is Proline--tRNA ligase, found in Thermoanaerobacter sp. (strain X514).